Reading from the N-terminus, the 978-residue chain is Chitin synthase 3 (978 aa).

Low complexity predominate over residues 1–13 (MGFNPQGQGNGPN). Disordered regions lie at residues 1–95 (MGFN…FDGH) and 108–127 (GHYP…YEYP). A glycan (N-linked (GlcNAc...) asparagine) is linked at N72. N604 carries an N-linked (GlcNAc...) asparagine glycan. Transmembrane regions (helical) follow at residues 641–661 (LVNV…TTII), 686–706 (IVNV…FVLA), 719–739 (VLSF…TGYL), 775–795 (LIII…FLYL), 803–823 (SFPQ…VYAF), 908–928 (VILW…DDFI), and 946–966 (VLLY…LWFI).

Belongs to the chitin synthase family. Class III subfamily.

The protein localises to the cell membrane. It catalyses the reaction [(1-&gt;4)-N-acetyl-beta-D-glucosaminyl](n) + UDP-N-acetyl-alpha-D-glucosamine = [(1-&gt;4)-N-acetyl-beta-D-glucosaminyl](n+1) + UDP + H(+). Functionally, polymerizes chitin, a structural polymer of the cell wall and septum, by transferring the sugar moiety of UDP-GlcNAc to the non-reducing end of the growing chitin polymer. Is essential for viability. This is Chitin synthase 3 from Fusarium oxysporum f. sp. lycopersici (strain 4287 / CBS 123668 / FGSC 9935 / NRRL 34936) (Fusarium vascular wilt of tomato).